Reading from the N-terminus, the 144-residue chain is D-aminoacyl-tRNA deacylase (144 aa).

The short motif at 136–137 (GP) is the Gly-cisPro motif, important for rejection of L-amino acids element.

The protein belongs to the DTD family. As to quaternary structure, homodimer.

It is found in the cytoplasm. The enzyme catalyses glycyl-tRNA(Ala) + H2O = tRNA(Ala) + glycine + H(+). The catalysed reaction is a D-aminoacyl-tRNA + H2O = a tRNA + a D-alpha-amino acid + H(+). Functionally, an aminoacyl-tRNA editing enzyme that deacylates mischarged D-aminoacyl-tRNAs. Also deacylates mischarged glycyl-tRNA(Ala), protecting cells against glycine mischarging by AlaRS. Acts via tRNA-based rather than protein-based catalysis; rejects L-amino acids rather than detecting D-amino acids in the active site. By recycling D-aminoacyl-tRNA to D-amino acids and free tRNA molecules, this enzyme counteracts the toxicity associated with the formation of D-aminoacyl-tRNA entities in vivo and helps enforce protein L-homochirality. The protein is D-aminoacyl-tRNA deacylase of Mannheimia succiniciproducens (strain KCTC 0769BP / MBEL55E).